The following is a 432-amino-acid chain: MQLLTIGINHHTAPVALRERVAFPLEQIKPALVTFKNVFLGPQAPNTPEAAILSTCNRTELYCATDDRAAREGALRWLSEYHRIPVDELAPHVYALPQSEAVRHAFRVASGLDSMVLGETQILGQMKDAVRTATEAGALGTYLNQLFQRTFAVAKEVRGTTEIGTQSVSMAAAAVRLAQRIFEKVSDQRVLFIGAGEMIELCATHFAAQGPRELVVANRTAERGQRLAERFNGRAMPLADLPTRMHEFDIIVSCTASTLPIIGLGAVERAVKARRHRPIFMVDLAVPRDIEPEVGKLKDVFLYTVDDLGAIVREGNASRQAAVAQAEAIIETRVQNFMQWLDTRSVVPVIRHMHTQADALRRAEVEKAQKLLARGDDPAAVLEALSQALTNKLIHGPTSALNRVNGADRDSLIDLMRGFYQHAPRSNDQSGH.

Substrate contacts are provided by residues 55 to 58 (TCNR), Ser114, 119 to 121 (ETQ), and Gln125. Residue Cys56 is the Nucleophile of the active site. 194–199 (GAGEMI) serves as a coordination point for NADP(+).

Belongs to the glutamyl-tRNA reductase family. As to quaternary structure, homodimer.

It carries out the reaction (S)-4-amino-5-oxopentanoate + tRNA(Glu) + NADP(+) = L-glutamyl-tRNA(Glu) + NADPH + H(+). It functions in the pathway porphyrin-containing compound metabolism; protoporphyrin-IX biosynthesis; 5-aminolevulinate from L-glutamyl-tRNA(Glu): step 1/2. Its function is as follows. Catalyzes the NADPH-dependent reduction of glutamyl-tRNA(Glu) to glutamate 1-semialdehyde (GSA). This chain is Glutamyl-tRNA reductase, found in Burkholderia cenocepacia (strain ATCC BAA-245 / DSM 16553 / LMG 16656 / NCTC 13227 / J2315 / CF5610) (Burkholderia cepacia (strain J2315)).